The chain runs to 602 residues: Prostaglandin G/H synthase 1 (602 aa).

The signal sequence occupies residues 1–26 (MSRRSLSLQFPLLLLLLLLPPPPVLL). The region spanning 34–72 (PVNPCCYYPCQNQGVCVRFGLDHYQCDCTRTGYSGPNCT) is the EGF-like domain. Cystine bridges form between C38–C49, C39–C161, C43–C59, and C61–C71. Residues N70, N106, and N146 are each glycosylated (N-linked (GlcNAc...) asparagine). H209 (proton acceptor) is an active-site residue. The active-site For cyclooxygenase activity is Y387. H390 is a binding site for heme b. N412 carries an N-linked (GlcNAc...) asparagine glycan. C571 and C577 form a disulfide bridge.

The protein belongs to the prostaglandin G/H synthase family. As to quaternary structure, homodimer. Heme b is required as a cofactor.

The protein localises to the microsome membrane. The protein resides in the endoplasmic reticulum membrane. It catalyses the reaction (5Z,8Z,11Z,14Z)-eicosatetraenoate + AH2 + 2 O2 = prostaglandin H2 + A + H2O. The catalysed reaction is (5Z,8Z,11Z,14Z)-eicosatetraenoate + 2 O2 = prostaglandin G2. The enzyme catalyses prostaglandin G2 + AH2 = prostaglandin H2 + A + H2O. It carries out the reaction (9Z,12Z)-octadecadienoate + AH2 + O2 = (9R)-hydroxy-(10E,12Z)-octadecadienoate + A + H2O. It catalyses the reaction (9Z,12Z)-octadecadienoate + AH2 + O2 = (9S)-hydroxy-(10E,12Z)-octadecadienoate + A + H2O. The catalysed reaction is (9Z,12Z)-octadecadienoate + AH2 + O2 = (13S)-hydroxy-(9Z,11E)-octadecadienoate + A + H2O. The enzyme catalyses (9Z,12Z)-octadecadienoate + AH2 + O2 = (13R)-hydroxy-(9Z,11E)-octadecadienoate + A + H2O. Its pathway is lipid metabolism; prostaglandin biosynthesis. With respect to regulation, the cyclooxygenase activity is inhibited by nonsteroidal anti-inflammatory drugs (NSAIDs) including ibuprofen, flurbiprofen, ketoprofen, naproxen, flurbiprofen, anirolac, fenclofenac and diclofenac. Functionally, dual cyclooxygenase and peroxidase that plays an important role in the biosynthesis pathway of prostanoids, a class of C20 oxylipins mainly derived from arachidonate ((5Z,8Z,11Z,14Z)-eicosatetraenoate, AA, C20:4(n-6)), with a particular role in the inflammatory response. The cyclooxygenase activity oxygenates AA to the hydroperoxy endoperoxide prostaglandin G2 (PGG2), and the peroxidase activity reduces PGG2 to the hydroxy endoperoxide prostaglandin H2 (PGH2), the precursor of all 2-series prostaglandins and thromboxanes. This complex transformation is initiated by abstraction of hydrogen at carbon 13 (with S-stereochemistry), followed by insertion of molecular O2 to form the endoperoxide bridge between carbon 9 and 11 that defines prostaglandins. The insertion of a second molecule of O2 (bis-oxygenase activity) yields a hydroperoxy group in PGG2 that is then reduced to PGH2 by two electrons. Involved in the constitutive production of prostanoids in particular in the stomach and platelets. In gastric epithelial cells, it is a key step in the generation of prostaglandins, such as prostaglandin E2 (PGE2), which plays an important role in cytoprotection. In platelets, it is involved in the generation of thromboxane A2 (TXA2), which promotes platelet activation and aggregation, vasoconstriction and proliferation of vascular smooth muscle cells. Can also use linoleate (LA, (9Z,12Z)-octadecadienoate, C18:2(n-6)) as substrate and produce hydroxyoctadecadienoates (HODEs) in a regio- and stereospecific manner, being (9R)-HODE ((9R)-hydroxy-(10E,12Z)-octadecadienoate) and (13S)-HODE ((13S)-hydroxy-(9Z,11E)-octadecadienoate) its major products. The chain is Prostaglandin G/H synthase 1 from Rattus norvegicus (Rat).